Reading from the N-terminus, the 256-residue chain is MRRPVVMGNWKLNGSKTMVAELLTGLNAELEGVEGVDVAVAPPALYIDLAERLIAEGGNKIILGAQNTDINNSGAFTGDMSPAMLKDFGATHIIIGHSERREYHNESDEFVAKKFAFLKENGLKPVFCIGETEAQNEAGETEAVCARQINAVIDAYGVEALNGAIIAYEPIWAIGTGKAATAEDAQRIHASIRAMIAAKDAAVAEQVIIQYGGSVKPENAEAYFAQPDIDGALVGGASLDAKSFAAIAKAAAKMKA.

9–11 serves as a coordination point for substrate; sequence NWK. H97 functions as the Electrophile in the catalytic mechanism. The active-site Proton acceptor is E169. Substrate-binding positions include G175, S214, and 235–236; that span reads GG.

It belongs to the triosephosphate isomerase family. In terms of assembly, homodimer.

Its subcellular location is the cytoplasm. The catalysed reaction is D-glyceraldehyde 3-phosphate = dihydroxyacetone phosphate. Its pathway is carbohydrate biosynthesis; gluconeogenesis. It functions in the pathway carbohydrate degradation; glycolysis; D-glyceraldehyde 3-phosphate from glycerone phosphate: step 1/1. In terms of biological role, involved in the gluconeogenesis. Catalyzes stereospecifically the conversion of dihydroxyacetone phosphate (DHAP) to D-glyceraldehyde-3-phosphate (G3P). This Vibrio vulnificus (strain CMCP6) protein is Triosephosphate isomerase.